Here is a 247-residue protein sequence, read N- to C-terminus: 2-dehydro-3-deoxy-phosphogluconate aldolase (247 aa).

It belongs to the DagF family.

It carries out the reaction 2-dehydro-3-deoxy-6-phospho-D-gluconate = D-glyceraldehyde 3-phosphate + pyruvate. Involved in the catabolism of D-glucosaminate. Catalyzes the conversion of keto-3-deoxygluconate 6-phosphate (KDGP) to yield pyruvate and glyceraldehyde-3-phosphate. This chain is 2-dehydro-3-deoxy-phosphogluconate aldolase, found in Salmonella typhimurium (strain 14028s / SGSC 2262).